We begin with the raw amino-acid sequence, 478 residues long: Ribosomal RNA small subunit methyltransferase F (478 aa).

Residues 121 to 127 (ASAPGSK), Glu-145, Asp-172, and Asp-190 each bind S-adenosyl-L-methionine. Cys-243 acts as the Nucleophile in catalysis.

The protein belongs to the class I-like SAM-binding methyltransferase superfamily. RsmB/NOP family.

Its subcellular location is the cytoplasm. The enzyme catalyses cytidine(1407) in 16S rRNA + S-adenosyl-L-methionine = 5-methylcytidine(1407) in 16S rRNA + S-adenosyl-L-homocysteine + H(+). Its function is as follows. Specifically methylates the cytosine at position 1407 (m5C1407) of 16S rRNA. The protein is Ribosomal RNA small subunit methyltransferase F of Shewanella sediminis (strain HAW-EB3).